The sequence spans 347 residues: RNA 3'-terminal phosphate cyclase (347 aa).

ATP is bound by residues Gln109 and Tyr290 to Gln294. His315 (tele-AMP-histidine intermediate) is an active-site residue.

It belongs to the RNA 3'-terminal cyclase family. Type 1 subfamily.

The protein resides in the cytoplasm. The enzyme catalyses a 3'-end 3'-phospho-ribonucleotide-RNA + ATP = a 3'-end 2',3'-cyclophospho-ribonucleotide-RNA + AMP + diphosphate. In terms of biological role, catalyzes the conversion of 3'-phosphate to a 2',3'-cyclic phosphodiester at the end of RNA. The mechanism of action of the enzyme occurs in 3 steps: (A) adenylation of the enzyme by ATP; (B) transfer of adenylate to an RNA-N3'P to produce RNA-N3'PP5'A; (C) and attack of the adjacent 2'-hydroxyl on the 3'-phosphorus in the diester linkage to produce the cyclic end product. The biological role of this enzyme is unknown but it is likely to function in some aspects of cellular RNA processing. The protein is RNA 3'-terminal phosphate cyclase of Ralstonia nicotianae (strain ATCC BAA-1114 / GMI1000) (Ralstonia solanacearum).